The primary structure comprises 460 residues: Cation efflux system protein CusC (460 aa).

Residues 1–17 form the signal peptide; the sequence is MSPCKLLPFCVALALTG. Cysteine 18 carries N-palmitoyl cysteine lipidation. Residue cysteine 18 is the site of S-diacylglycerol cysteine attachment.

The protein belongs to the outer membrane factor (OMF) (TC 1.B.17) family. Homotrimer. Component of the cus efflux system composed of CusA, CusB, CusC and CusF.

The protein localises to the cell outer membrane. Forms pores that allow passive diffusion of cations across the outer membrane. Part of a cation efflux system that mediates resistance to copper and silver. This Escherichia coli O157:H7 protein is Cation efflux system protein CusC (cusC).